A 299-amino-acid chain; its full sequence is MTTVNLAAYRFVSLDSIEQWRPLVAARCNTLGLRGTILLAPEGINLFIAGPREATDAFVDYIRHDPLFEGKFADLPFKESLSDSQPFRRMLVRLKREIITMKKPAIKPELGRAPAVDARTLKAWLDQGHDDAGRPVVMLDTRNAFEVDVGTFDRALDYRIDKFSEFPAVIEANRADLEGKTIVSFCTGGIRCEKAAIHMKDVGIENVYQLEGGILKYFEEVGGAHYHGDCFVFDYRTALNPQLAPTADVTCFACRAVVPADAQQSPLYVPGKCCPACHPGDSGTPGRRAEPGAEPARAV.

Residues 132–226 (AGRPVVMLDT…YFEEVGGAHY (95 aa)) form the Rhodanese domain. Cys-186 (cysteine persulfide intermediate) is an active-site residue.

The protein belongs to the TrhO family.

It catalyses the reaction uridine(34) in tRNA + AH2 + O2 = 5-hydroxyuridine(34) in tRNA + A + H2O. Its function is as follows. Catalyzes oxygen-dependent 5-hydroxyuridine (ho5U) modification at position 34 in tRNAs. The sequence is that of tRNA uridine(34) hydroxylase from Burkholderia pseudomallei (strain 1106a).